Here is a 342-residue protein sequence, read N- to C-terminus: uncharacterized protein (342 aa).

The first 18 residues, 1–18, serve as a signal peptide directing secretion; the sequence is MWKKLMLLLLMAIPLVSA.

This is an uncharacterized protein from Methanocaldococcus jannaschii (strain ATCC 43067 / DSM 2661 / JAL-1 / JCM 10045 / NBRC 100440) (Methanococcus jannaschii).